The sequence spans 195 residues: Pyruvoyl-dependent arginine decarboxylase AaxB (195 aa).

At S53 the chain carries Pyruvic acid (Ser).

This sequence belongs to the pyruvoyl-dependent arginine decarboxylase family. In terms of assembly, trimer of an alpha-beta dimer. It depends on pyruvate as a cofactor.

It localises to the cytoplasm. The enzyme catalyses L-arginine + H(+) = agmatine + CO2. Functionally, part of the AaxABC system, catalyzes the decarboxylation of L-arginine. The arginine uptake by the bacterium in the macrophage may be a virulence factor against the host innate immune response. This chain is Pyruvoyl-dependent arginine decarboxylase AaxB (aaxB), found in Chlamydia caviae (strain ATCC VR-813 / DSM 19441 / 03DC25 / GPIC) (Chlamydophila caviae).